Reading from the N-terminus, the 670-residue chain is DNA ligase (670 aa).

NAD(+) contacts are provided by residues 35 to 39, 84 to 85, and glutamate 116; these read DSVYD and SL. Lysine 118 (N6-AMP-lysine intermediate) is an active-site residue. The NAD(+) site is built by arginine 139, glutamate 176, lysine 293, and lysine 317. The Zn(2+) site is built by cysteine 411, cysteine 414, cysteine 429, and cysteine 435. A BRCT domain is found at 592–670; that stretch reads VVKSEIAGKT…EEAFLKLLKS (79 aa).

This sequence belongs to the NAD-dependent DNA ligase family. LigA subfamily. The cofactor is Mg(2+). It depends on Mn(2+) as a cofactor.

The enzyme catalyses NAD(+) + (deoxyribonucleotide)n-3'-hydroxyl + 5'-phospho-(deoxyribonucleotide)m = (deoxyribonucleotide)n+m + AMP + beta-nicotinamide D-nucleotide.. In terms of biological role, DNA ligase that catalyzes the formation of phosphodiester linkages between 5'-phosphoryl and 3'-hydroxyl groups in double-stranded DNA using NAD as a coenzyme and as the energy source for the reaction. It is essential for DNA replication and repair of damaged DNA. The protein is DNA ligase of Coxiella burnetii (strain Dugway 5J108-111).